The chain runs to 310 residues: Malate dehydrogenase (310 aa).

NAD(+) is bound by residues 7–12 (GAGNVG) and Asp-32. Positions 81 and 87 each coordinate substrate. NAD(+)-binding positions include Asn-94 and 117 to 119 (VSN). Substrate is bound by residues Asn-119 and Arg-150. The active-site Proton acceptor is the His-174.

Belongs to the LDH/MDH superfamily. MDH type 3 family.

The catalysed reaction is (S)-malate + NAD(+) = oxaloacetate + NADH + H(+). Its function is as follows. Catalyzes the reversible oxidation of malate to oxaloacetate. The chain is Malate dehydrogenase from Chloroherpeton thalassium (strain ATCC 35110 / GB-78).